The chain runs to 148 residues: UPF0260 protein YcgN (148 aa).

This sequence belongs to the UPF0260 family.

The polypeptide is UPF0260 protein YcgN (Salmonella paratyphi A (strain AKU_12601)).